Reading from the N-terminus, the 428-residue chain is MTAIIDLHAREILDSRGNPTVEVDVLLEDGSFGRAAVPSGASTGAHEAIELRDGDQGRYLGKGVTRAVDAVNTTIADTLLGLDAEDQRDIDTVMLDLDGTPNKAKLGANAILGTSLAVAKAAAAARGMPLWAYVGGVSAHMLPVPMMNIVNGGEHADNPIDIQEFMVMPVGADSLAEAVRWGAEIFHTLKKGLSEKGLSTSVGDEGGFAPDIASTRDALDFIMQSIEKAGFKPGEEVALALDCASTEFFADGRYDLAGEEVSLSPEEMAKYLADLCNDYPIRSIEDGMAEDDLEGWKALTDLIGNKVQLVGDDLFVTNSERLAMGIDKGLANSLLVKVNQIGTLSETLEAVDMAHRAGYTCVMSHRSGETEDATIADLAVATNCGQIKTGSLARSDRLAKYNQLIRIEEELGNSAHYAGAACFGRLAR.

Glutamine 163 lines the (2R)-2-phosphoglycerate pocket. Glutamate 205 serves as the catalytic Proton donor. Residues aspartate 242, glutamate 285, and aspartate 312 each coordinate Mg(2+). (2R)-2-phosphoglycerate is bound by residues lysine 337, arginine 366, serine 367, and lysine 388. Lysine 337 acts as the Proton acceptor in catalysis.

It belongs to the enolase family. Mg(2+) is required as a cofactor.

It localises to the cytoplasm. The protein localises to the secreted. It is found in the cell surface. It carries out the reaction (2R)-2-phosphoglycerate = phosphoenolpyruvate + H2O. It functions in the pathway carbohydrate degradation; glycolysis; pyruvate from D-glyceraldehyde 3-phosphate: step 4/5. In terms of biological role, catalyzes the reversible conversion of 2-phosphoglycerate (2-PG) into phosphoenolpyruvate (PEP). It is essential for the degradation of carbohydrates via glycolysis. This is Enolase from Erythrobacter litoralis (strain HTCC2594).